Reading from the N-terminus, the 688-residue chain is MFKKLFGQLQRIGKALMLPVAILPAAGILLAFGNAMHNEQLVEIAPWLKNDIIVMISSVMEAAGQVVFDNLPLLFAVGTALGLAGGDGVAALAALVGYLIMNATMGKVLHITIDDIFSYAKGAKELSQAAKEPAHALVLGIPTLQTGVFGGIIMGALAAWCYNKFYNITLPPFLGFFAGKRFVPIVTSVVAIATGVLLSFAWPPIQDGLNSLSNFLLNKNLTLTTFIFGIIERSLIPFGLHHIFYSPFWFEFGSYTNHAGELVRGDQRIWMAQLKDGVPFTAGAFTTGKYPFMMFGLPAAAFAIYKNARPERKKVVGGLMLSAGLTAFLTGITEPLEFSFLFVAPVLYGIHVLLAGTSFLVMHLLGVKIGMTFSGGFIDYILYGLLNWDRSHALLVIPVGIVYAIVYYFLFDFAIRKFKLKTPGREDEETEIRNSSVAKLPFDVLDAMGGKENIKHLDACITRLRVEVVDKSKVDVAGIKALGASGVLEVGNNMQAIFGPKSDQIKHDMAKIMSGEITKPSETTVTEEMSDEPVHVEALGTTDIYAPGIGQIIPLSEVPDQVFAGKMMGDGVGFIPEKGEIVAPFDGTVKTIFPTKHAIGLESESGVEVLIHIGIDTVKLNGEGFESLINVDEKVTQGQPLMKVNLAYLKAHAPSIVTPMIITNLENKELVIEDVQDADPGKLIMTVK.

The 425-residue stretch at 3 to 427 folds into the PTS EIIC type-1 domain; the sequence is KKLFGQLQRI…FKLKTPGRED (425 aa). 10 helical membrane passes run 12-32, 81-101, 137-157, 182-202, 223-243, 284-304, 315-335, 340-360, 364-384, and 395-415; these read IGKA…LLAF, LGLA…YLIM, LVLG…MGAL, FVPI…SFAW, LTTF…LHHI, AFTT…AFAI, VVGG…ITEP, FLFV…TSFL, LLGV…ILYG, and LVIP…DFAI. In terms of domain architecture, PTS EIIB type-1 spans 438–519; the sequence is AKLPFDVLDA…AKIMSGEITK (82 aa). The Phosphocysteine intermediate; for EIIB activity role is filled by Cys460. The PTS EIIA type-1 domain occupies 560 to 664; sequence DQVFAGKMMG…SIVTPMIITN (105 aa). Catalysis depends on His612, which acts as the Tele-phosphohistidine intermediate; for EIIA activity.

The protein resides in the cell membrane. Its function is as follows. The phosphoenolpyruvate-dependent sugar phosphotransferase system (sugar PTS), a major carbohydrate active -transport system, catalyzes the phosphorylation of incoming sugar substrates concomitantly with their translocation across the cell membrane. This system is involved in alpha- and beta-glucoside transport. This is PTS system glucoside-specific EIICBA component (glcB) from Staphylococcus aureus (strain USA300).